Consider the following 141-residue polypeptide: Flagellar assembly factor FliW 1 (141 aa).

This sequence belongs to the FliW family. Interacts with translational regulator CsrA and flagellin(s).

Its subcellular location is the cytoplasm. In terms of biological role, acts as an anti-CsrA protein, binds CsrA and prevents it from repressing translation of its target genes, one of which is flagellin. Binds to flagellin and participates in the assembly of the flagellum. The chain is Flagellar assembly factor FliW 1 from Desulfotalea psychrophila (strain LSv54 / DSM 12343).